A 261-amino-acid polypeptide reads, in one-letter code: MATAPTPREEFVYMAKLAEQAERYEEMVEFMEKVTAAVESEELTVEERNLLSVAYKNVIGARRASWRIISSIEQKEESRGNDEHVSVIRDYRSKIETELSNICNGILKLLDSRLIPSAALGDSKVFYLKMKGDYHRYLAEFKSGAERKDAAESTLTAYKSAQDIANTELPPTHPIRLGLALNFSVFYYEILNSPDRACGLAKQAFDEAIAELDTLGEESYKDSTLIMQLLRDNLTLWTSDMQDDGADEIKEAAPKGNDEPQ.

The protein belongs to the 14-3-3 family.

The protein is 14-3-3-like protein A of Vicia faba (Broad bean).